Reading from the N-terminus, the 208-residue chain is Large ribosomal subunit protein bL9 (208 aa).

A disordered region spans residues 161-208 (KKRKIEKEVEEGSGTSVDESLKLDSVSDSIDTSGVNSSDKEEENNIIE). Residues 186 to 197 (VSDSIDTSGVNS) are compositionally biased toward polar residues.

This sequence belongs to the bacterial ribosomal protein bL9 family.

Its function is as follows. Binds to the 23S rRNA. The polypeptide is Large ribosomal subunit protein bL9 (Ehrlichia canis (strain Jake)).